We begin with the raw amino-acid sequence, 359 residues long: S-adenosylmethionine:tRNA ribosyltransferase-isomerase (359 aa).

Belongs to the QueA family. Monomer.

The protein localises to the cytoplasm. It carries out the reaction 7-aminomethyl-7-carbaguanosine(34) in tRNA + S-adenosyl-L-methionine = epoxyqueuosine(34) in tRNA + adenine + L-methionine + 2 H(+). It functions in the pathway tRNA modification; tRNA-queuosine biosynthesis. Functionally, transfers and isomerizes the ribose moiety from AdoMet to the 7-aminomethyl group of 7-deazaguanine (preQ1-tRNA) to give epoxyqueuosine (oQ-tRNA). This is S-adenosylmethionine:tRNA ribosyltransferase-isomerase from Colwellia psychrerythraea (strain 34H / ATCC BAA-681) (Vibrio psychroerythus).